A 507-amino-acid chain; its full sequence is Trigger factor (507 aa).

The PPIase FKBP-type domain maps to 162 to 243 (GDFVSLDLSA…VRGVKEKELP (82 aa)). Residues 434-507 (NLPRRPSGEA…DSELPASETK (74 aa)) form a disordered region. The segment covering 442–460 (EAEDDVRDISDELDAEELE) has biased composition (acidic residues). The span at 461-488 (VPAAAPSAEVTAAAGDEATATATATDAD) shows a compositional bias: low complexity.

Belongs to the FKBP-type PPIase family. Tig subfamily.

It localises to the cytoplasm. The enzyme catalyses [protein]-peptidylproline (omega=180) = [protein]-peptidylproline (omega=0). Its function is as follows. Involved in protein export. Acts as a chaperone by maintaining the newly synthesized protein in an open conformation. Functions as a peptidyl-prolyl cis-trans isomerase. This chain is Trigger factor, found in Parafrankia sp. (strain EAN1pec).